The primary structure comprises 170 residues: NADH-quinone oxidoreductase subunit B (170 aa).

4 residues coordinate [4Fe-4S] cluster: Cys-46, Cys-47, Cys-111, and Cys-141.

This sequence belongs to the complex I 20 kDa subunit family. NDH-1 is composed of 14 different subunits. Subunits NuoB, C, D, E, F, and G constitute the peripheral sector of the complex. [4Fe-4S] cluster is required as a cofactor.

The protein localises to the cell membrane. The catalysed reaction is a quinone + NADH + 5 H(+)(in) = a quinol + NAD(+) + 4 H(+)(out). In terms of biological role, NDH-1 shuttles electrons from NADH, via FMN and iron-sulfur (Fe-S) centers, to quinones in the respiratory chain. The immediate electron acceptor for the enzyme in this species is believed to be a menaquinone. Couples the redox reaction to proton translocation (for every two electrons transferred, four hydrogen ions are translocated across the cytoplasmic membrane), and thus conserves the redox energy in a proton gradient. The polypeptide is NADH-quinone oxidoreductase subunit B (Geobacillus sp. (strain WCH70)).